Consider the following 597-residue polypeptide: Electron transfer flavoprotein-ubiquinone oxidoreductase, mitochondrial (597 aa).

53–67 contributes to the FAD binding site; sequence VVIVGGGPSGLSAAI. The stretch at 91 to 112 is an intramembrane region; it reads IGGHTLSGAVIETRALDELIPN. 2 residues coordinate a ubiquinone: glycine 285 and glycine 286. Residues 409-426 lie within the membrane without spanning it; that stretch reads IDPATYDKNIRDTYVVKE. [4Fe-4S] cluster is bound by residues cysteine 540, cysteine 566, cysteine 569, and cysteine 572. Residues 557–586 form the 4Fe-4S ferredoxin-type domain; sequence KRLQINAQNCIHCKTCDIKDPQQNINWVTP.

It belongs to the ETF-QO/FixC family. In terms of assembly, monomer. [4Fe-4S] cluster serves as cofactor. It depends on FAD as a cofactor.

It is found in the mitochondrion inner membrane. The catalysed reaction is a ubiquinone + reduced [electron-transfer flavoprotein] = a ubiquinol + oxidized [electron-transfer flavoprotein] + H(+). In terms of biological role, accepts electrons from ETF and reduces ubiquinone. The protein is Electron transfer flavoprotein-ubiquinone oxidoreductase, mitochondrial (let-721) of Caenorhabditis elegans.